Reading from the N-terminus, the 366-residue chain is Probable neutral protease 2 homolog B (366 aa).

The signal sequence occupies residues 1-19 (MQVIVALAALSSLAAPALG). Positions 20-189 (FSIPRGVPVS…RGPRSRITKR (170 aa)) are excised as a propeptide. Disulfide bonds link Cys-197–Cys-267, Cys-274–Cys-292, and Cys-306–Cys-366. His-317 serves as a coordination point for Zn(2+). The active site involves Glu-318. The Zn(2+) site is built by His-321 and Asp-332.

It belongs to the peptidase M35 family. The cofactor is Zn(2+).

It is found in the secreted. The enzyme catalyses Preferential cleavage of bonds with hydrophobic residues in P1'. Also 3-Asn-|-Gln-4 and 8-Gly-|-Ser-9 bonds in insulin B chain.. Its function is as follows. Probable secreted metalloprotease that shows high activities on basic nuclear substrates such as histone and protamine. May be involved in virulence. The polypeptide is Probable neutral protease 2 homolog B (NpII-B) (Trichophyton rubrum (Athlete's foot fungus)).